The primary structure comprises 100 residues: Small ribosomal subunit protein uS14c (100 aa).

Belongs to the universal ribosomal protein uS14 family. As to quaternary structure, part of the 30S ribosomal subunit.

The protein resides in the plastid. Its subcellular location is the chloroplast. In terms of biological role, binds 16S rRNA, required for the assembly of 30S particles. The chain is Small ribosomal subunit protein uS14c from Cryptomeria japonica (Japanese cedar).